Here is a 111-residue protein sequence, read N- to C-terminus: MKTLLLALVVVAFMCLGSADEVGLGNEQIDRGRRQAIGPPFTRCSKCNRNWSPPFPLGLYTVSHVKSCGGHLSSIGQCGEDWVVKGCAKTCPTAGPGERVKCCYSPRCNKN.

The N-terminal stretch at 1–19 is a signal peptide; that stretch reads MKTLLLALVVVAFMCLGSA. The propeptide occupies 20–34; sequence DEVGLGNEQIDRGRR. Residue Gln35 is modified to Pyrrolidone carboxylic acid. 4 disulfides stabilise this stretch: Cys44–Cys68, Cys47–Cys87, Cys91–Cys102, and Cys103–Cys108.

The protein belongs to the three-finger toxin family. Ancestral subfamily. Boigatoxin sub-subfamily. As to expression, expressed by the venom gland.

The protein localises to the secreted. Its function is as follows. Potent postsynaptic neurotoxin. Displays readily reversible competitive antagonism at the nicotinic acetylcholine receptor (nAChR). In Trimorphodon biscutatus (Western lyre snake), this protein is Toxin 3FTx-Tri3.